The primary structure comprises 509 residues: Glucose-1-phosphate adenylyltransferase large subunit 4, chloroplastic/amyloplastic (509 aa).

The transit peptide at 1–36 (MATCSWAATTAAAAPPRPPARCRSRVAALRRTAAAS) directs the protein to the chloroplast.

It belongs to the bacterial/plant glucose-1-phosphate adenylyltransferase family. As to quaternary structure, heterotetramer composed of two small and two large subunits. Expressed in leaves and stems.

The protein localises to the plastid. Its subcellular location is the chloroplast. It catalyses the reaction alpha-D-glucose 1-phosphate + ATP + H(+) = ADP-alpha-D-glucose + diphosphate. Its pathway is glycan biosynthesis; starch biosynthesis. Its activity is regulated as follows. Activated by 3'phosphoglycerate, inhibited by orthophosphate. Allosteric regulation. In terms of biological role, involved in synthesis of starch. Catalyzes the synthesis of ADP-glucose, a molecule that serves as an activated glycosyl donor for alpha-1,4-glucan synthesis. Essential for starch synthesis in leaf chloroplasts. The protein is Glucose-1-phosphate adenylyltransferase large subunit 4, chloroplastic/amyloplastic of Oryza sativa subsp. japonica (Rice).